The chain runs to 422 residues: Serine--tRNA ligase (422 aa).

The tract at residues 1–20 is disordered; sequence MHDLKSIRDNPDGFDAGLKR. 229-231 provides a ligand contact to L-serine; it reads TAE. Residue 260–262 participates in ATP binding; sequence RSE. E283 contacts L-serine. 347-350 serves as a coordination point for ATP; it reads EISS. L-serine is bound at residue S383.

It belongs to the class-II aminoacyl-tRNA synthetase family. Type-1 seryl-tRNA synthetase subfamily. As to quaternary structure, homodimer. The tRNA molecule binds across the dimer.

The protein resides in the cytoplasm. It catalyses the reaction tRNA(Ser) + L-serine + ATP = L-seryl-tRNA(Ser) + AMP + diphosphate + H(+). The enzyme catalyses tRNA(Sec) + L-serine + ATP = L-seryl-tRNA(Sec) + AMP + diphosphate + H(+). Its pathway is aminoacyl-tRNA biosynthesis; selenocysteinyl-tRNA(Sec) biosynthesis; L-seryl-tRNA(Sec) from L-serine and tRNA(Sec): step 1/1. Its function is as follows. Catalyzes the attachment of serine to tRNA(Ser). Is also able to aminoacylate tRNA(Sec) with serine, to form the misacylated tRNA L-seryl-tRNA(Sec), which will be further converted into selenocysteinyl-tRNA(Sec). The protein is Serine--tRNA ligase of Paramagnetospirillum magneticum (strain ATCC 700264 / AMB-1) (Magnetospirillum magneticum).